We begin with the raw amino-acid sequence, 691 residues long: Elongation factor G (691 aa).

A tr-type G domain is found at 8-282; sequence ERVRNIGIAA…AVVDYLPAPI (275 aa). Residues 17–24, 81–85, and 135–138 contribute to the GTP site; these read AHIDAGKT, DTPGH, and NKMD.

It belongs to the TRAFAC class translation factor GTPase superfamily. Classic translation factor GTPase family. EF-G/EF-2 subfamily.

The protein localises to the cytoplasm. Its function is as follows. Catalyzes the GTP-dependent ribosomal translocation step during translation elongation. During this step, the ribosome changes from the pre-translocational (PRE) to the post-translocational (POST) state as the newly formed A-site-bound peptidyl-tRNA and P-site-bound deacylated tRNA move to the P and E sites, respectively. Catalyzes the coordinated movement of the two tRNA molecules, the mRNA and conformational changes in the ribosome. This Synechococcus sp. (strain CC9902) protein is Elongation factor G.